We begin with the raw amino-acid sequence, 508 residues long: Maturase K (508 aa).

This sequence belongs to the intron maturase 2 family. MatK subfamily.

It is found in the plastid. Its subcellular location is the chloroplast. Its function is as follows. Usually encoded in the trnK tRNA gene intron. Probably assists in splicing its own and other chloroplast group II introns. This Cunninghamia lanceolata (China fir) protein is Maturase K.